A 291-amino-acid chain; its full sequence is Light-independent protochlorophyllide reductase iron-sulfur ATP-binding protein (291 aa).

ATP-binding positions include 10–15 (GIGKST) and lysine 39. Serine 14 provides a ligand contact to Mg(2+). Cysteine 95 and cysteine 129 together coordinate [4Fe-4S] cluster. Residue 180-181 (NR) coordinates ATP.

The protein belongs to the NifH/BchL/ChlL family. In terms of assembly, homodimer. Protochlorophyllide reductase is composed of three subunits; ChlL, ChlN and ChlB. Requires [4Fe-4S] cluster as cofactor.

The protein resides in the plastid. It is found in the chloroplast. It catalyses the reaction chlorophyllide a + oxidized 2[4Fe-4S]-[ferredoxin] + 2 ADP + 2 phosphate = protochlorophyllide a + reduced 2[4Fe-4S]-[ferredoxin] + 2 ATP + 2 H2O. It functions in the pathway porphyrin-containing compound metabolism; chlorophyll biosynthesis (light-independent). In terms of biological role, component of the dark-operative protochlorophyllide reductase (DPOR) that uses Mg-ATP and reduced ferredoxin to reduce ring D of protochlorophyllide (Pchlide) to form chlorophyllide a (Chlide). This reaction is light-independent. The L component serves as a unique electron donor to the NB-component of the complex, and binds Mg-ATP. This chain is Light-independent protochlorophyllide reductase iron-sulfur ATP-binding protein, found in Picea abies (Norway spruce).